The following is a 66-amino-acid chain: Disintegrin EO5B (66 aa).

A Disintegrin domain is found at 1–65; it reads NSAHPCCDPV…DCPRNPYKGK (65 aa). Intrachain disulfides connect Cys-6-Cys-29, Cys-20-Cys-26, Cys-25-Cys-50, and Cys-38-Cys-57. Residues 42–44 carry the Cell attachment site; atypical (VGD) motif; it reads VGD.

The protein belongs to the disintegrin family. Dimeric disintegrin subfamily. In terms of assembly, heterodimer with EO4A or EO5A; disulfide-linked. In terms of tissue distribution, expressed by the venom gland.

Its subcellular location is the secreted. Poor inhibitor of platelet aggregation. When it dimerizes with EO4A, it inhibits the adhesion of cells expressing the RGD-dependent integrin alpha-5/beta-1 (ITGA5/ITGB1) to immobilized fibronectin. When it dimerizes with EO5A, it inhibits the adhesion of the alpha-4/beta-1 (ITGA4/ITGB1) integrin to VCAM-1. When it dimerizes either with EO4A or EO5A, the inhibition on alpha-IIb/beta-3 (ITGA2B/ITGB3) is low. This Echis ocellatus (Ocellated saw-scaled viper) protein is Disintegrin EO5B.